The chain runs to 194 residues: MMINTQEDKLVSAHDAEEFHRFFVGHDSDLQQEVTTLLTREADLLDIQAYKAWLEHCVAPEIKYQVISRELRSTSERRYQLNDAVNIYNENYQQLKVRVEHQMDPQNWYNSPKIRFTRFVTNVTAAKDKSAPEMLHVRSNLILHRARRGNQVDVFYATREDKWKRIEGGGIKLVERFVDYPERSPQTHNLMIFL.

The protein belongs to the bacterial ring-hydroxylating dioxygenase beta subunit family. As to quaternary structure, the 2,4-dinitrotoluene dioxygenase (DNTDO) multicomponent enzyme system is composed of an electron transfer component and a dioxygenase component (iron sulfur protein (ISP)). The electron transfer component is composed of a ferredoxin reductase (DntAa) and a ferredoxin (DntAb), and the dioxygenase component is formed of a large alpha subunit (DntAc) and a small beta subunit (DntAd).

Functionally, component of the 2,4-dinitrotoluene dioxygenase (DNTDO) multicomponent enzyme system which catalyzes the incorporation of both atoms of molecular oxygen into 2,4-dinitrotoluene (DNT) to form 4-methyl-5-nitrocatechol (MNC) and nitrite. The beta subunit seems to have a structural role in the holoenzyme. Also able to convert naphthalene to cis-(1R,2S)-dihydroxy-1,2-dihydronaphthalene. The polypeptide is 2,4-dinitrotoluene dioxygenase system, small oxygenase component (Burkholderia sp. (strain RASC)).